A 374-amino-acid polypeptide reads, in one-letter code: Cytochrome b (374 aa).

Helical transmembrane passes span 25-45 (FGSM…FLAI), 69-90 (WIIQ…YMHI), 105-125 (WLSG…GYVL), and 170-190 (FFAL…IHII). Heme b is bound by residues H75 and H89. Heme b is bound by residues H174 and H188. H193 lines the a ubiquinone pocket. The next 4 helical transmembrane spans lie at 218–238 (YKDM…LSFT), 280–300 (LGGA…PFTH), 312–332 (LAQI…WTAT), and 339–358 (FITI…MINP).

It belongs to the cytochrome b family. As to quaternary structure, the cytochrome bc1 complex contains 3 respiratory subunits (MT-CYB, CYC1 and UQCRFS1), 2 core proteins (UQCRC1 and UQCRC2) and probably 6 low-molecular weight proteins. Heme b serves as cofactor.

The protein localises to the mitochondrion inner membrane. Component of the ubiquinol-cytochrome c reductase complex (complex III or cytochrome b-c1 complex) that is part of the mitochondrial respiratory chain. The b-c1 complex mediates electron transfer from ubiquinol to cytochrome c. Contributes to the generation of a proton gradient across the mitochondrial membrane that is then used for ATP synthesis. In Calliophis bivirgatus (Blue Malaysian coral snake), this protein is Cytochrome b (MT-CYB).